The primary structure comprises 146 residues: D-aminoacyl-tRNA deacylase (146 aa).

The Gly-cisPro motif, important for rejection of L-amino acids signature appears at 138–139 (GP).

The protein belongs to the DTD family. In terms of assembly, homodimer.

The protein localises to the cytoplasm. The catalysed reaction is glycyl-tRNA(Ala) + H2O = tRNA(Ala) + glycine + H(+). It catalyses the reaction a D-aminoacyl-tRNA + H2O = a tRNA + a D-alpha-amino acid + H(+). In terms of biological role, an aminoacyl-tRNA editing enzyme that deacylates mischarged D-aminoacyl-tRNAs. Also deacylates mischarged glycyl-tRNA(Ala), protecting cells against glycine mischarging by AlaRS. Acts via tRNA-based rather than protein-based catalysis; rejects L-amino acids rather than detecting D-amino acids in the active site. By recycling D-aminoacyl-tRNA to D-amino acids and free tRNA molecules, this enzyme counteracts the toxicity associated with the formation of D-aminoacyl-tRNA entities in vivo and helps enforce protein L-homochirality. The polypeptide is D-aminoacyl-tRNA deacylase (Xanthomonas campestris pv. campestris (strain 8004)).